The primary structure comprises 89 residues: Small ribosomal subunit protein uS14 (89 aa).

This sequence belongs to the universal ribosomal protein uS14 family. In terms of assembly, part of the 30S ribosomal subunit. Contacts proteins S3 and S10.

Binds 16S rRNA, required for the assembly of 30S particles and may also be responsible for determining the conformation of the 16S rRNA at the A site. The sequence is that of Small ribosomal subunit protein uS14 from Pelodictyon phaeoclathratiforme (strain DSM 5477 / BU-1).